The primary structure comprises 99 residues: Protein dpy-30 homolog (99 aa).

Met1 carries the post-translational modification N-acetylmethionine. A disordered region spans residues 1–26; the sequence is MEPEQMLEGQTQVAENPHSEYGLTDN. At Ser19 the chain carries Phosphoserine. Lys35 bears the N6-acetyllysine; alternate mark. Lys35 participates in a covalent cross-link: Glycyl lysine isopeptide (Lys-Gly) (interchain with G-Cter in SUMO2); alternate.

The protein belongs to the dpy-30 family. As to quaternary structure, homodimer. Core component of several methyltransferase-containing complexes including MLL1/MLL, MLL2/3 (also named ASCOM complex) and MLL4/WBP7. Each complex is at least composed of ASH2L, RBBP5, WDR5, DPY30, one or more specific histone methyltransferases (KMT2A/MLL1, KMT2D/MLL2, KMT2C/MLL3 and KMT2B/MLL4), and the facultative components MEN1, HCFC1, HCFC2, NCOA6, KDM6A, PAXIP1/PTIP, PAGR1 and alpha- and beta-tubulin. Interacts with ASH2L; the interaction is direct. Interacts with ARFGEF1. Component of the SET1 complex, at least composed of the catalytic subunit (SETD1A or SETD1B), WDR5, WDR82, RBBP5, ASH2L/ASH2, CXXC1/CFP1, HCFC1 and DPY30.

It is found in the nucleus. The protein resides in the golgi apparatus. It localises to the trans-Golgi network. Its function is as follows. As part of the MLL1/MLL complex, involved in the methylation of histone H3 at 'Lys-4', particularly trimethylation. Histone H3 'Lys-4' methylation represents a specific tag for epigenetic transcriptional activation. May play some role in histone H3 acetylation. In embryonic stem cells, may play a crucial role in retinoic acid-induced differentiation along the neural lineage, regulating gene induction and H3 'Lys-4' methylation at key developmental loci. May also play an indirect or direct role in endosomal transport. The chain is Protein dpy-30 homolog (DPY30) from Bos taurus (Bovine).